Here is a 197-residue protein sequence, read N- to C-terminus: Small ribosomal subunit protein uS4B (197 aa).

The 63-residue stretch at 88 to 150 (SRLDNMVYRM…SRKTEMFVNN (63 aa)) folds into the S4 RNA-binding domain.

It belongs to the universal ribosomal protein uS4 family. In terms of assembly, part of the 30S ribosomal subunit. Contacts protein S5. The interaction surface between S4 and S5 is involved in control of translational fidelity.

One of the primary rRNA binding proteins, it binds directly to 16S rRNA where it nucleates assembly of the body of the 30S subunit. In terms of biological role, with S5 and S12 plays an important role in translational accuracy. The protein is Small ribosomal subunit protein uS4B of Clostridium perfringens (strain SM101 / Type A).